Consider the following 841-residue polypeptide: Translation initiation factor IF-2 (841 aa).

Basic and acidic residues-rich tracts occupy residues 1 to 12, 52 to 92, 114 to 170, 188 to 202, and 213 to 235; these read MSDNEIKNEAPK, ALKA…EATK, EQPK…REEA, READRDNDRRSEANR, and KKGDREDKNERNADRRNQKDVKG. Disordered stretches follow at residues 1–24 and 52–246; these read MSDNEIKNEAPKKLSLQRRTKTTV and ALKA…GSAL. Positions 340–510 constitute a tr-type G domain; it reads TRAPVVTIMG…LLQSEVLELT (171 aa). The segment at 349 to 356 is G1; it reads GHVDHGKT. 349–356 contributes to the GTP binding site; that stretch reads GHVDHGKT. Residues 374 to 378 form a G2 region; it reads GITQH. The G3 stretch occupies residues 396–399; sequence DTPG. Residues 396–400 and 450–453 each bind GTP; these read DTPGH and NKID. Residues 450–453 form a G4 region; the sequence is NKID. The tract at residues 486–488 is G5; sequence SAK.

This sequence belongs to the TRAFAC class translation factor GTPase superfamily. Classic translation factor GTPase family. IF-2 subfamily.

The protein localises to the cytoplasm. In terms of biological role, one of the essential components for the initiation of protein synthesis. Protects formylmethionyl-tRNA from spontaneous hydrolysis and promotes its binding to the 30S ribosomal subunits. Also involved in the hydrolysis of GTP during the formation of the 70S ribosomal complex. This is Translation initiation factor IF-2 from Actinobacillus pleuropneumoniae serotype 5b (strain L20).